The chain runs to 634 residues: Threonine--tRNA ligase (634 aa).

In terms of domain architecture, TGS spans 1–61 (MINIRFPDGS…NSNCELRLIT (61 aa)). The segment at 241 to 532 (DHRKIGKVLD…LIEHYAGNLP (292 aa)) is catalytic. Residues Cys332, His383, and His509 each contribute to the Zn(2+) site.

It belongs to the class-II aminoacyl-tRNA synthetase family. In terms of assembly, homodimer. Zn(2+) serves as cofactor.

It localises to the cytoplasm. The catalysed reaction is tRNA(Thr) + L-threonine + ATP = L-threonyl-tRNA(Thr) + AMP + diphosphate + H(+). Catalyzes the attachment of threonine to tRNA(Thr) in a two-step reaction: L-threonine is first activated by ATP to form Thr-AMP and then transferred to the acceptor end of tRNA(Thr). Also edits incorrectly charged L-seryl-tRNA(Thr). This chain is Threonine--tRNA ligase, found in Francisella tularensis subsp. tularensis (strain WY96-3418).